The primary structure comprises 616 residues: TAF6-like RNA polymerase II p300/CBP-associated factor-associated factor 65 kDa subunit 6L (616 aa).

Disordered stretches follow at residues 399-432 and 455-539; these read SLLL…EDPS and FGTG…GTRD. Phosphoserine is present on residues Ser-494 and Ser-500. An asymmetric dimethylarginine mark is found at Arg-549, Arg-555, and Arg-587.

It belongs to the TAF6 family. As to quaternary structure, the PCAF complex is composed of a number of TBP-associated factors (TAFS), such as TAF5, TAF5L, TAF6, TAF6L, TAF9, TAF10 and TAF12, PCAF, and also PCAF-associated factors (PAFs), such as TADA2L/ADA2, TADA3L/ADA3 and SPT3. Component of the STAGA transcription coactivator-HAT complex, at least composed of SUPT3H, GCN5L2, TAF5L, TAF6L, SUPT7L, TADA3L, TAD1L, TAF10, TAF12, TRRAP and TAF9.

It is found in the nucleus. In terms of biological role, functions as a component of the PCAF complex. The PCAF complex is capable of efficiently acetylating histones in a nucleosomal context. The PCAF complex could be considered as the human version of the yeast SAGA complex. With TAF5L, acts as an epigenetic regulator essential for somatic reprogramming. Regulates target genes through H3K9ac deposition and MYC recruitment which trigger MYC regulatory network to orchestrate gene expression programs to control embryonic stem cell state. Functions with MYC to activate target gene expression through RNA polymerase II pause release. The polypeptide is TAF6-like RNA polymerase II p300/CBP-associated factor-associated factor 65 kDa subunit 6L (Mus musculus (Mouse)).